Consider the following 489-residue polypeptide: ATP synthase subunit beta 1 (489 aa).

159–166 (GGAGVGKT) is an ATP binding site. Residues 465-477 (EKSKKAAEDKPKA) are compositionally biased toward basic and acidic residues. Residues 465-489 (EKSKKAAEDKPKAEEDEDATSLHDA) form a disordered region.

It belongs to the ATPase alpha/beta chains family. In terms of assembly, F-type ATPases have 2 components, CF(1) - the catalytic core - and CF(0) - the membrane proton channel. CF(1) has five subunits: alpha(3), beta(3), gamma(1), delta(1), epsilon(1). CF(0) has three main subunits: a(1), b(2) and c(9-12). The alpha and beta chains form an alternating ring which encloses part of the gamma chain. CF(1) is attached to CF(0) by a central stalk formed by the gamma and epsilon chains, while a peripheral stalk is formed by the delta and b chains.

The protein resides in the cell inner membrane. The enzyme catalyses ATP + H2O + 4 H(+)(in) = ADP + phosphate + 5 H(+)(out). Functionally, produces ATP from ADP in the presence of a proton gradient across the membrane. The catalytic sites are hosted primarily by the beta subunits. This Marinomonas sp. (strain MWYL1) protein is ATP synthase subunit beta 1.